Consider the following 785-residue polypeptide: Semaphorin-3F (785 aa).

Residues 1–18 form the signal peptide; it reads MLVAGLLLWASLLTGAWP. The 515-residue stretch at 31-545 folds into the Sema domain; sequence RVRLSFKELK…SAVGVTHLSL (515 aa). A glycan (N-linked (GlcNAc...) asparagine) is linked at asparagine 53. Cysteine 104 and cysteine 115 are joined by a disulfide. A glycan (N-linked (GlcNAc...) asparagine) is linked at asparagine 126. Cystine bridges form between cysteine 133–cysteine 142, cysteine 300–cysteine 412, cysteine 324–cysteine 372, cysteine 548–cysteine 566, and cysteine 678–cysteine 746. The Ig-like C2-type domain occupies 605–690; sequence ANKNAVESVQ…TENNFKHVVT (86 aa). The interval 752–785 is disordered; it reads HVPPSPREAPGAPRSPEPQDQKKPRNRRHHPPDT. Positions 775–785 are enriched in basic residues; it reads PRNRRHHPPDT.

The protein belongs to the semaphorin family. Expressed abundantly but differentially in a variety of neural and nonneural tissues. There is high expression in mammary gland, kidney, fetal brain, and lung and lower expression in heart and liver.

It localises to the secreted. Its function is as follows. May play a role in cell motility and cell adhesion. The sequence is that of Semaphorin-3F (SEMA3F) from Homo sapiens (Human).